A 186-amino-acid polypeptide reads, in one-letter code: CASP-like protein ARALYDRAFT_316979 (186 aa).

Residues 1 to 23 (MRRNGDGEEVVAKRRRRIKELVQ) lie on the Cytoplasmic side of the membrane. A helical membrane pass occupies residues 24-44 (VALRGGCLAASATAMAVMLTA). Over 45-70 (TEEGVADIYGFKLTLSSNWSFSPSYQ) the chain is Extracellular. N-linked (GlcNAc...) asparagine glycosylation is present at asparagine 62. Residues 71-91 (YVVGACTGTVLYSLFQLCLGV) traverse the membrane as a helical segment. The Cytoplasmic segment spans residues 92–115 (YRLLTGSPITPSRFQAWLCFTSDQ). Residues 116-132 (LFGYLMMSAGSAGSGVT) traverse the membrane as a helical segment. At 133-161 (NLNKTGIRHTPLPDFCKTLSSFCNHVALS) the chain is on the extracellular side. N-linked (GlcNAc...) asparagine glycosylation occurs at asparagine 135. The chain crosses the membrane as a helical span at residues 162 to 182 (LLLVFLSFIFLASSSFFTVLV). Residues 183-186 (LSTP) lie on the Cytoplasmic side of the membrane.

The protein belongs to the Casparian strip membrane proteins (CASP) family. As to quaternary structure, homodimer and heterodimers.

It localises to the cell membrane. The polypeptide is CASP-like protein ARALYDRAFT_316979 (Arabidopsis lyrata subsp. lyrata (Lyre-leaved rock-cress)).